The primary structure comprises 296 residues: Elongation factor Ts (296 aa).

Positions 82–85 (TDFV) are involved in Mg(2+) ion dislocation from EF-Tu.

It belongs to the EF-Ts family.

The protein resides in the cytoplasm. Functionally, associates with the EF-Tu.GDP complex and induces the exchange of GDP to GTP. It remains bound to the aminoacyl-tRNA.EF-Tu.GTP complex up to the GTP hydrolysis stage on the ribosome. This Coxiella burnetii (strain CbuK_Q154) (Coxiella burnetii (strain Q154)) protein is Elongation factor Ts.